Here is a 184-residue protein sequence, read N- to C-terminus: Large ribosomal subunit protein uL6 (184 aa).

This sequence belongs to the universal ribosomal protein uL6 family. In terms of assembly, part of the 50S ribosomal subunit.

In terms of biological role, this protein binds to the 23S rRNA, and is important in its secondary structure. It is located near the subunit interface in the base of the L7/L12 stalk, and near the tRNA binding site of the peptidyltransferase center. The protein is Large ribosomal subunit protein uL6 of Onion yellows phytoplasma (strain OY-M).